Here is a 262-residue protein sequence, read N- to C-terminus: uncharacterized protein (262 aa).

The signal sequence occupies residues 1–22 (MGYLKRFALYISVMILIFAIAG). A lipid anchor (N-palmitoyl cysteine) is attached at Cys-23. Cys-23 carries S-diacylglycerol cysteine lipidation.

It belongs to the staphylococcal tandem lipoprotein family.

Its subcellular location is the cell membrane. This is an uncharacterized protein from Staphylococcus aureus (strain NCTC 8325 / PS 47).